The primary structure comprises 372 residues: Delta-type opioid receptor (372 aa).

The Extracellular portion of the chain corresponds to 1–47; that stretch reads MEPVPSARAELQFSLLANVSDTFPSAFPSASANASGSPGARSASSLA. N18 and N33 each carry an N-linked (GlcNAc...) asparagine glycan. Residues 48–75 traverse the membrane as a helical segment; that stretch reads LAIAITALYSAVCAVGLLGNVLVMFGIV. Over 76–85 the chain is Cytoplasmic; sequence RYTKLKTATN. The chain crosses the membrane as a helical span at residues 86–110; sequence IYIFNLALADALATSTLPFQSAKYL. Residues 111–122 lie on the Extracellular side of the membrane; it reads METWPFGELLCK. Residues C121 and C198 are joined by a disulfide bond. A helical transmembrane segment spans residues 123 to 144; the sequence is AVLSIDYYNMFTSIFTLTMMSV. Residues 145–163 are Cytoplasmic-facing; it reads DRYIAVCHPVKALDFRTPA. Residues 164–186 traverse the membrane as a helical segment; that stretch reads KAKLINICIWVLASGVGVPIMVM. Over 187–206 the chain is Extracellular; the sequence is AVTQPRDGAVVCTLQFPSPS. The chain crosses the membrane as a helical span at residues 207–238; that stretch reads WYWDTVTKICVFLFAFVVPILIITVCYGLMLL. Residues 239–261 are Cytoplasmic-facing; that stretch reads RLRSVRLLSGSKEKDRSLRRITR. The helical transmembrane segment at 262–284 threads the bilayer; that stretch reads MVLVVVGAFVVCWAPIHIFVIVW. At 285-299 the chain is on the extracellular side; the sequence is TLVDINRRDPLVVAA. A helical membrane pass occupies residues 300 to 321; the sequence is LHLCIALGYANSSLNPVLYAFL. The Cytoplasmic segment spans residues 322 to 372; that stretch reads DENFKRCFRQLCRAPCGGQEPGSLRRPRQATARERVTACTPSDGPGGGAAA. A lipid anchor (S-palmitoyl cysteine) is attached at C333. Positions 340–372 are disordered; the sequence is QEPGSLRRPRQATARERVTACTPSDGPGGGAAA.

The protein belongs to the G-protein coupled receptor 1 family. In terms of assembly, may form homooligomers. Forms a heterodimer with OPRM1. Interacts with GPRASP1. Interacts with RTP4; the interaction promotes cell surface localization of the OPRD1-OPRM1 heterodimer. Ubiquitinated. A basal ubiquitination seems not to be related to degradation. Ubiquitination is increased upon formation of OPRM1:OPRD1 oligomers leading to proteasomal degradation; the ubiquitination is diminished by RTP4. Detected in brain, brain stem and brain cortex.

It localises to the cell membrane. Its function is as follows. G-protein coupled receptor that functions as a receptor for endogenous enkephalins and for a subset of other opioids. Ligand binding causes a conformation change that triggers signaling via guanine nucleotide-binding proteins (G proteins) and modulates the activity of down-stream effectors, such as adenylate cyclase. Signaling leads to the inhibition of adenylate cyclase activity. Inhibits neurotransmitter release by reducing calcium ion currents and increasing potassium ion conductance. Plays a role in the perception of pain and in opiate-mediated analgesia. Plays a role in developing analgesic tolerance to morphine. This Rattus norvegicus (Rat) protein is Delta-type opioid receptor (Oprd1).